We begin with the raw amino-acid sequence, 360 residues long: Phosphoserine aminotransferase (360 aa).

Arginine 41 is an L-glutamate binding site. The pyridoxal 5'-phosphate site is built by tryptophan 101, threonine 152, aspartate 172, and glutamine 195. The residue at position 196 (lysine 196) is an N6-(pyridoxal phosphate)lysine. Residue asparagine 237–threonine 238 coordinates pyridoxal 5'-phosphate.

This sequence belongs to the class-V pyridoxal-phosphate-dependent aminotransferase family. SerC subfamily. Homodimer. The cofactor is pyridoxal 5'-phosphate.

It localises to the cytoplasm. It carries out the reaction O-phospho-L-serine + 2-oxoglutarate = 3-phosphooxypyruvate + L-glutamate. It catalyses the reaction 4-(phosphooxy)-L-threonine + 2-oxoglutarate = (R)-3-hydroxy-2-oxo-4-phosphooxybutanoate + L-glutamate. It functions in the pathway amino-acid biosynthesis; L-serine biosynthesis; L-serine from 3-phospho-D-glycerate: step 2/3. The protein operates within cofactor biosynthesis; pyridoxine 5'-phosphate biosynthesis; pyridoxine 5'-phosphate from D-erythrose 4-phosphate: step 3/5. Its function is as follows. Catalyzes the reversible conversion of 3-phosphohydroxypyruvate to phosphoserine and of 3-hydroxy-2-oxo-4-phosphonooxybutanoate to phosphohydroxythreonine. This chain is Phosphoserine aminotransferase, found in Paraburkholderia phymatum (strain DSM 17167 / CIP 108236 / LMG 21445 / STM815) (Burkholderia phymatum).